Consider the following 388-residue polypeptide: Xylose isomerase (388 aa).

Active-site residues include H54 and D57. Residues E181, E217, H220, D245, D255, D257, and D287 each contribute to the Mg(2+) site.

It belongs to the xylose isomerase family. As to quaternary structure, homotetramer. Mg(2+) serves as cofactor.

It localises to the cytoplasm. It catalyses the reaction alpha-D-xylose = alpha-D-xylulofuranose. This Streptomyces corchorusii (Streptomyces chibaensis) protein is Xylose isomerase.